A 94-amino-acid chain; its full sequence is Translation initiation factor IF-1 (94 aa).

One can recognise an S1-like domain in the interval 1–72 (MAKEELIQFE…EKGRLIFRHK (72 aa)). The interval 71 to 94 (HKDERPGGTGAPRGAPPRGQFRRR) is disordered. The span at 82–94 (PRGAPPRGQFRRR) shows a compositional bias: low complexity.

It belongs to the IF-1 family. As to quaternary structure, component of the 30S ribosomal translation pre-initiation complex which assembles on the 30S ribosome in the order IF-2 and IF-3, IF-1 and N-formylmethionyl-tRNA(fMet); mRNA recruitment can occur at any time during PIC assembly.

Its subcellular location is the cytoplasm. Functionally, one of the essential components for the initiation of protein synthesis. Stabilizes the binding of IF-2 and IF-3 on the 30S subunit to which N-formylmethionyl-tRNA(fMet) subsequently binds. Helps modulate mRNA selection, yielding the 30S pre-initiation complex (PIC). Upon addition of the 50S ribosomal subunit IF-1, IF-2 and IF-3 are released leaving the mature 70S translation initiation complex. The chain is Translation initiation factor IF-1 from Rhodopseudomonas palustris (strain BisB5).